The sequence spans 682 residues: MCGIFAYMNYRVPKTRKEIFETLIRGLQRLEYRGYDSAGVAIDGNNHEVKERHIHLVKKRGKVKALDEELYKQDSMDLKVEFETHFGIAHTRWATHGVPNAVNSHPQRSDKDNEFVVIHNGIITNYKDLRKFLESKGYEFESETDTETIAKLIKYVFDNRETEDITFSTLVERVIQQLEGAFALVFKSIHYPGEAVATRRGSPLLIGVRSKYKLSTEQIPVLYPTCNIENVKNICKTRMKRLDSSTCLHAVGDKAVEFFFASDASAIIEHTNRVIFLEDDDIAAVADGKLSIHRVKRSATDDPSRAIQTLQMELQQIMKGNFSAFMQKEIFEQPESVFNTMRGRVNFETNTVLLGGLKDHLKEIRRCRRLIVIGCGTSYHAAVATRQVLEELTELPVMVELASDFLDRNTPVFRDDVCFFISQSGETADTLLALRYCKDRGALTVGITNTVGSSISRETDCGVHINAGPEIGVASTKAYTSQFISLVMFGLMMSEDRISLQNRRQEIIRGLRSLPELIKEVLSLDEKIHDLALELYTQRSLLVMGRGYNYATCLEGALKIKEITYMHSEGILAGELKHGPLALVDKQMPVIMVIMKDPCFAKCQNALQQVTARQGRPIILCSKDDTESSKFAYKTIELPHTVDCLQGILSVIPLQLLSFHLAVLRGYDVDFPRNLAKSVTVE.

The active-site For GATase activity is C2. A Glutamine amidotransferase type-2 domain is found at 2–288 (CGIFAYMNYR…DDDIAAVADG (287 aa)). Phosphoserine is present on S244. 2 SIS domains span residues 360–499 (HLKE…DRIS) and 531–672 (LALE…VDFP). Substrate contacts are provided by residues 377–378 (TS), 422–424 (SQS), T427, and H578.

It catalyses the reaction D-fructose 6-phosphate + L-glutamine = D-glucosamine 6-phosphate + L-glutamate. It functions in the pathway nucleotide-sugar biosynthesis; UDP-N-acetyl-alpha-D-glucosamine biosynthesis; alpha-D-glucosamine 6-phosphate from D-fructose 6-phosphate: step 1/1. In terms of biological role, controls the flux of glucose into the hexosamine pathway. Most likely involved in regulating the availability of precursors for N- and O-linked glycosylation of proteins. This Mus musculus (Mouse) protein is Glutamine--fructose-6-phosphate aminotransferase [isomerizing] 2 (Gfpt2).